Consider the following 406-residue polypeptide: Tyrosine--tRNA ligase (406 aa).

Tyrosine 35 contributes to the L-tyrosine binding site. A 'HIGH' region motif is present at residues 40-49; sequence PTGPSLHIGH. Tyrosine 168 and glutamine 172 together coordinate L-tyrosine. Positions 228-232 match the 'KMSKS' region motif; sequence KMGKS. Residue lysine 231 participates in ATP binding. The 67-residue stretch at 339 to 405 folds into the S4 RNA-binding domain; the sequence is IGIIDLFAEA…GKKRFMRIIF (67 aa).

The protein belongs to the class-I aminoacyl-tRNA synthetase family. TyrS type 1 subfamily. Homodimer.

The protein localises to the cytoplasm. The enzyme catalyses tRNA(Tyr) + L-tyrosine + ATP = L-tyrosyl-tRNA(Tyr) + AMP + diphosphate + H(+). Functionally, catalyzes the attachment of tyrosine to tRNA(Tyr) in a two-step reaction: tyrosine is first activated by ATP to form Tyr-AMP and then transferred to the acceptor end of tRNA(Tyr). In Treponema denticola (strain ATCC 35405 / DSM 14222 / CIP 103919 / JCM 8153 / KCTC 15104), this protein is Tyrosine--tRNA ligase.